We begin with the raw amino-acid sequence, 482 residues long: GTPase Obg (482 aa).

The 158-residue stretch at 2–159 folds into the Obg domain; the sequence is PRFIDRVVVH…RELTLELKTV (158 aa). Positions 160-341 constitute an OBG-type G domain; the sequence is ADVGLVGFPS…LIFALWDMVA (182 aa). GTP is bound by residues 166-173, 191-195, 212-215, 292-295, and 322-324; these read GFPSAGKS, FTTLA, DVPG, NKID, and STV. 2 residues coordinate Mg(2+): serine 173 and threonine 193. Residues 359–437 form the OCT domain; that stretch reads PIPVDETAFS…IGDMTFDWEP (79 aa). Residues 450–482 form a disordered region; it reads RGTDVRLEQTDRVGADERKAARKARRQSDDGEE. The span at 452 to 468 shows a compositional bias: basic and acidic residues; it reads TDVRLEQTDRVGADERK.

This sequence belongs to the TRAFAC class OBG-HflX-like GTPase superfamily. OBG GTPase family. In terms of assembly, monomer. Mg(2+) serves as cofactor.

The protein localises to the cytoplasm. Functionally, an essential GTPase which binds GTP, GDP and possibly (p)ppGpp with moderate affinity, with high nucleotide exchange rates and a fairly low GTP hydrolysis rate. Plays a role in control of the cell cycle, stress response, ribosome biogenesis and in those bacteria that undergo differentiation, in morphogenesis control. This is GTPase Obg from Mycolicibacterium gilvum (strain PYR-GCK) (Mycobacterium gilvum (strain PYR-GCK)).